The sequence spans 101 residues: Ferredoxin Fdx2 (101 aa).

2 4Fe-4S ferredoxin-type domains span residues 1-29 (MATY…EGDE) and 31-64 (YVID…PNPQ). Residues C9, C12, C15, C19, C38, C41, C50, and C54 each coordinate [4Fe-4S] cluster.

Requires [4Fe-4S] cluster as cofactor.

In terms of biological role, ferredoxins are iron-sulfur proteins that transfer electrons in a wide variety of metabolic reactions. Fdx2 can receive electrons from both FdR_A and FdR_B ferredoxin reductases, with a preference for FdR_B compared with FdR_A, and transfer the electrons to the cytochrome P450 CYP260A1. The chain is Ferredoxin Fdx2 from Sorangium cellulosum (strain So ce56) (Polyangium cellulosum (strain So ce56)).